The primary structure comprises 261 residues: uncharacterized protein (261 aa).

The disordered stretch occupies residues Met-1 to Gln-22. 3 consecutive transmembrane segments (helical) span residues Ile-92 to Leu-112, Ile-122 to Phe-142, and Ile-147 to Tyr-167.

The protein resides in the membrane. This is an uncharacterized protein from Dictyostelium discoideum (Social amoeba).